Here is a 338-residue protein sequence, read N- to C-terminus: Protein WVD2-like 2 (338 aa).

The segment covering 1-14 (MGRELVDKHMDKKA) has biased composition (basic and acidic residues). The disordered stretch occupies residues 1–150 (MGRELVDKHM…SFSVASSSAT (150 aa)). Polar residues-rich tracts occupy residues 15–37 (NSLT…STNE) and 59–69 (QGITETPGSHK). Residues 100-115 (NNSLGNGASHNSSSAS) are compositionally biased toward low complexity. The segment covering 128-138 (RIPDHKMHHDE) has biased composition (basic and acidic residues). The stretch at 177–214 (REFYQKLEEKQKALEAEKRENEKRLKEEQEAVTKQLRK) forms a coiled coil. Residues 222 to 338 (PVPSFYQEGP…GENGVGVVEE (117 aa)) are disordered. Residues 288-300 (TNSVPRTPNSSSK) are compositionally biased toward polar residues.

This sequence belongs to the TPX2 family. In terms of tissue distribution, expressed in seedlings.

The protein localises to the cytoplasm. Its subcellular location is the cytoskeleton. Its function is as follows. Microtubule-associated protein (MAP) that regulates the orientation of interphase cortical microtubules. The chain is Protein WVD2-like 2 from Arabidopsis thaliana (Mouse-ear cress).